The primary structure comprises 506 residues: Protein MGF 505-4R (506 aa).

It belongs to the asfivirus MGF 505 family.

In terms of biological role, plays a role in virus cell tropism, and may be required for efficient virus replication in macrophages. This is Protein MGF 505-4R from Ornithodoros (relapsing fever ticks).